The following is a 703-amino-acid chain: Elongation factor G (703 aa).

The tr-type G domain maps to 10 to 286 (NKVRNIGIMA…AVVKFLPSPL (277 aa)). GTP-binding positions include 19–26 (AHIDAGKT), 83–87 (DTPGH), and 137–140 (NKLD).

It belongs to the TRAFAC class translation factor GTPase superfamily. Classic translation factor GTPase family. EF-G/EF-2 subfamily.

The protein localises to the cytoplasm. Functionally, catalyzes the GTP-dependent ribosomal translocation step during translation elongation. During this step, the ribosome changes from the pre-translocational (PRE) to the post-translocational (POST) state as the newly formed A-site-bound peptidyl-tRNA and P-site-bound deacylated tRNA move to the P and E sites, respectively. Catalyzes the coordinated movement of the two tRNA molecules, the mRNA and conformational changes in the ribosome. This is Elongation factor G from Nocardioides sp. (strain ATCC BAA-499 / JS614).